Consider the following 1221-residue polypeptide: DNA-directed RNA polymerase subunit beta (1221 aa).

Positions 1176–1221 (EKKKLAEEEAEIAAEAEAEGSAEEDAAEADADANEAETADDDKASK) are disordered. The segment covering 1183 to 1215 (EEAEIAAEAEAEGSAEEDAAEADADANEAETAD) has biased composition (acidic residues).

It belongs to the RNA polymerase beta chain family. In terms of assembly, the RNAP catalytic core consists of 2 alpha, 1 beta, 1 beta' and 1 omega subunit. When a sigma factor is associated with the core the holoenzyme is formed, which can initiate transcription.

The enzyme catalyses RNA(n) + a ribonucleoside 5'-triphosphate = RNA(n+1) + diphosphate. In terms of biological role, DNA-dependent RNA polymerase catalyzes the transcription of DNA into RNA using the four ribonucleoside triphosphates as substrates. This chain is DNA-directed RNA polymerase subunit beta, found in Lactobacillus delbrueckii subsp. bulgaricus (strain ATCC BAA-365 / Lb-18).